A 405-amino-acid chain; its full sequence is L-rhamnonate dehydratase (405 aa).

The substrate site is built by His33 and Arg59. Residues Asp226, Glu252, and Glu280 each coordinate Mg(2+). His329 acts as the Proton acceptor in catalysis. Glu349 lines the substrate pocket.

Belongs to the mandelate racemase/muconate lactonizing enzyme family. RhamD subfamily. As to quaternary structure, homooctamer; tetramer of dimers. It depends on Mg(2+) as a cofactor.

The enzyme catalyses L-rhamnonate = 2-dehydro-3-deoxy-L-rhamnonate + H2O. Catalyzes the dehydration of L-rhamnonate to 2-keto-3-deoxy-L-rhamnonate (KDR). The protein is L-rhamnonate dehydratase of Salmonella paratyphi C (strain RKS4594).